The primary structure comprises 855 residues: Pre-mRNA-splicing factor SYF1 (855 aa).

HAT repeat units follow at residues leucine 15–glycine 47, alanine 48–alanine 80, proline 90–aspartate 122, glycine 124–serine 158, proline 160–arginine 192, glutamine 198–glutamine 230, valine 235–arginine 268, glycine 270–serine 305, and glycine 369–aspartate 407. The residue at position 420 (lysine 420) is an N6-acetyllysine. HAT repeat units follow at residues glycine 498–glutamate 530, lysine 532–serine 566, arginine 571–glutamate 605, tyrosine 643–lysine 677, and glycine 679–arginine 713. A disordered region spans residues alanine 808–aspartate 855. Over residues glutamine 820 to proline 834 the composition is skewed to acidic residues. Serine 851 carries the post-translational modification Phosphoserine.

Belongs to the crooked-neck family. As to quaternary structure, associates with RNA polymerase II, the TCR-specific proteins CKN1/CSA and ERCC6/CSB, and XPA. Identified in the spliceosome C complex. Component of the XAB2 complex, a multimeric protein complex composed of XAB2, PRPF19, AQR, ZNF830, ISY1, and PPIE. Identified in a pentameric intron-binding (IB) complex composed of AQR, XAB2, ISY1, ZNF830 and PPIE that is incorporated into the spliceosome as a preassembled complex. The IB complex does not contain PRPF19.

It is found in the nucleus. Involved in pre-mRNA splicing as component of the spliceosome. Involved in transcription-coupled repair (TCR), transcription and pre-mRNA splicing. The polypeptide is Pre-mRNA-splicing factor SYF1 (Xab2) (Rattus norvegicus (Rat)).